We begin with the raw amino-acid sequence, 466 residues long: Asparagine--tRNA ligase (466 aa).

The protein belongs to the class-II aminoacyl-tRNA synthetase family. Homodimer.

Its subcellular location is the cytoplasm. The enzyme catalyses tRNA(Asn) + L-asparagine + ATP = L-asparaginyl-tRNA(Asn) + AMP + diphosphate + H(+). The polypeptide is Asparagine--tRNA ligase (Xylella fastidiosa (strain 9a5c)).